The primary structure comprises 290 residues: Probable ECF RNA polymerase sigma factor SigI (290 aa).

Residues tryptophan 11 to serine 74 are sigma-70 factor domain-2. The short motif at aspartate 34–glutamine 37 is the Polymerase core binding element. The tract at residues leucine 110–isoleucine 162 is sigma-70 factor domain-4_2. A DNA-binding region (H-T-H motif) is located at residues tyrosine 137–histidine 156.

This sequence belongs to the sigma-70 factor family. ECF subfamily. As to quaternary structure, interacts transiently with the RNA polymerase catalytic core formed by RpoA, RpoB, RpoC and RpoZ (2 alpha, 1 beta, 1 beta' and 1 omega subunit) to form the RNA polymerase holoenzyme that can initiate transcription.

In terms of biological role, sigma factors are initiation factors that promote the attachment of RNA polymerase to specific initiation sites and are then released. Extracytoplasmic function (ECF) sigma factors are held in an inactive form by a cognate anti-sigma factor until released, although no anti-sigma factor is known for this protein. This chain is Probable ECF RNA polymerase sigma factor SigI (sigI), found in Mycobacterium tuberculosis (strain CDC 1551 / Oshkosh).